Reading from the N-terminus, the 436-residue chain is ABC transporter permease YtrF (436 aa).

The N-terminal stretch at 1–31 (MRFKDQVHFIRRNMKKNRLRVFMTILATTMA) is a signal peptide. Cys32 carries N-palmitoyl cysteine lipidation. A lipid anchor (S-diacylglycerol cysteine) is attached at Cys32. Residues 115-165 (NMNDELKANMELEKGRVAKSENEIVVGYDFAKRLLTKKESEEYNKKIEEAK) are a coiled coil. Helical transmembrane passes span 293–313 (FKIG…IGIF), 350–370 (YIGI…SYLV), and 396–416 (IPAS…VISG).

This sequence belongs to the ABC-4 integral membrane protein family. In terms of assembly, the complex is composed of 2 ATP-binding proteins (YtrB and YtrE), 2 transmembrane proteins (YtrC and YtrD) and a solute-binding protein (YtrF).

The protein localises to the cell membrane. Part of the ABC transporter complex YtrBCDEF that plays a role in acetoin utilization during stationary phase and sporulation. This Bacillus subtilis (strain 168) protein is ABC transporter permease YtrF (ytrF).